The following is a 484-amino-acid chain: Putative beta-barrel assembly-enhancing protease (484 aa).

Residues methionine 1–alanine 23 form the signal peptide. Histidine 133 lines the Zn(2+) pocket. Residue glutamate 134 is part of the active site. Histidine 137 and glutamate 198 together coordinate Zn(2+). The Proton donor role is filled by aspartate 202. TPR repeat units lie at residues proline 307 to asparagine 340, histidine 341 to asparagine 374, valine 376 to aspartate 408, and alanine 426 to glycine 459.

The protein belongs to the peptidase M48 family. BepA subfamily. The cofactor is Zn(2+).

Its subcellular location is the periplasm. Its function is as follows. Functions both as a chaperone and a metalloprotease. Maintains the integrity of the outer membrane by promoting either the assembly or the elimination of outer membrane proteins, depending on their folding state. The chain is Putative beta-barrel assembly-enhancing protease from Vibrio cholerae serotype O1 (strain ATCC 39315 / El Tor Inaba N16961).